A 209-amino-acid polypeptide reads, in one-letter code: Rac-like GTP-binding protein ARAC9 (209 aa).

Residue 25-32 (GDGAVGKT) participates in GTP binding. Positions 47–55 (YVPTVFDNF) match the Effector region motif. GTP is bound by residues 72 to 76 (DTAGQ) and 130 to 133 (TKSD). The residue at position 206 (Cys-206) is a Cysteine methyl ester. Cys-206 carries S-geranylgeranyl cysteine lipidation. The propeptide at 207–209 (HVL) is removed in mature form.

It belongs to the small GTPase superfamily. Rho family. Interacts with SPK1.

It is found in the cytoplasm. The protein localises to the membrane. In terms of biological role, inactive GDP-bound Rho GTPases reside in the cytosol, are found in a complex with Rho GDP-dissociation inhibitors (Rho GDIs), and are released from the GDI protein in order to translocate to membranes upon activation. The polypeptide is Rac-like GTP-binding protein ARAC9 (ARAC9) (Arabidopsis thaliana (Mouse-ear cress)).